The sequence spans 101 residues: DNA-binding protein Fis (101 aa).

A DNA-binding region (H-T-H motif) is located at residues 77–96 (QTRAANMLGINRGTLRKKLK).

Belongs to the transcriptional regulatory Fis family. In terms of assembly, homodimer.

In terms of biological role, activates ribosomal RNA transcription. Plays a direct role in upstream activation of rRNA promoters. The polypeptide is DNA-binding protein Fis (Shewanella sediminis (strain HAW-EB3)).